Reading from the N-terminus, the 315-residue chain is MADTIFGSGNDQWVCPNDRQLALRAKLQTGWSVHTYQTEKQRRKQHLSPAEVEAILQVIQRAERLDVLEQQRIGRLVERLETMRRNVMGNGLSQCLLCGEVLGFLGSSSVFCKDCRKKVCTKCGIEASPGQKRPLWLCKICSEQREVWKRSGAWFYKGLPKYILPLKTPGRADDPHFRPLPTEPAEREPRSSETSRIYTWARGRVVSSDSDSDSDLSSSSLEDRLPSTGVRDRKGDKPWKESGGSVEAPRMGFTHPPGHLSGCQSSLASGETGTGSADPPGGPRPGLTRRAPVKDTPGRAPAADAAPAGPSSCLG.

Residues 41 to 158 (QRRKQHLSPA…KRSGAWFYKG (118 aa)) enclose the RabBD domain. An FYVE-type zinc finger spans residues 89 to 146 (GNGLSQCLLCGEVLGFLGSSSVFCKDCRKKVCTKCGIEASPGQKRPLWLCKICSEQRE). Residues Cys-95, Cys-98, Cys-112, Cys-115, Cys-120, Cys-123, Cys-138, and Cys-141 each contribute to the Zn(2+) site. Positions 170 to 315 (GRADDPHFRP…APAGPSSCLG (146 aa)) are disordered. 2 stretches are compositionally biased toward basic and acidic residues: residues 184–193 (PAEREPRSSE) and 221–240 (LEDR…KPWK). Positions 262–275 (GCQSSLASGETGTG) are enriched in polar residues. A compositionally biased stretch (low complexity) spans 298–315 (GRAPAADAAPAGPSSCLG).

Recruited to dense-core vesicles through specific interaction with RAB27A in endocrine cells. Interacts with RAB3A, RAB3B, RAB3C and RAB3D. Interacts with ZYX. In terms of tissue distribution, moderate to high levels of expression in thyroid, ovary, stomach, heart, pancreas, skeletal muscle, kidney and liver. Also detected in epithelial cells.

Its subcellular location is the cytoplasm. The protein localises to the cytoplasmic vesicle. It localises to the secretory vesicle membrane. Its function is as follows. Rab GTPase effector involved in the late steps of regulated exocytosis, both in endocrine and exocrine cells. Acts as a potential RAB3B effector protein in epithelial cells. The sequence is that of Rab effector Noc2 (RPH3AL) from Homo sapiens (Human).